Consider the following 102-residue polypeptide: Late embryogenesis abundant protein D-19 (102 aa).

Residues 1–102 (MASEQYQAMR…IDESKFRTKN (102 aa)) are disordered. Basic and acidic residues predominate over residues 48-58 (EGRHKGGETRK).

Belongs to the small hydrophilic plant seed protein family.

LEA proteins are late embryonic proteins abundant in higher plant seed embryos. There are two subsets of LEA proteins (5a and 5b), the first ones are expressed when the cotyledon weight reach 80 mg and the second set are expressed above 100 mg. The function of those proteins is not known. This chain is Late embryogenesis abundant protein D-19, found in Gossypium hirsutum (Upland cotton).